A 275-amino-acid polypeptide reads, in one-letter code: HUWE1-associated protein modifying stress responses 1 (275 aa).

The span at 32-44 (AEQDEQLPPELQE) shows a compositional bias: acidic residues. Residues 32 to 51 (AEQDEQLPPELQEEAAAAAQ) form a disordered region. The tract at residues 80 to 152 (QQPGLSLWVP…LISFLCGKVP (73 aa)) is HUWE1-binding and HAPSTR1 oligomerization (HBO) domain. Disordered regions lie at residues 155–181 (RNSR…SSVE), 204–227 (SVRS…RRRN), and 250–275 (GTRK…NRMI). Residue serine 167 is modified to Phosphoserine. Residues 172 to 181 (TSTETSSSVE) show a composition bias toward low complexity. Residues 204–216 (SVRSSTPGSPTHV) are compositionally biased toward polar residues. Serine 212 is subject to Phosphoserine.

It belongs to the HAPSTR1 family. Homooligomer. Heterooligomer with HAPSTR2; the interaction is direct and stabilizes HAPSTR1. Interacts with HUWE1. Post-translationally, ubiquitinated by HUWE1. Promotes HAPSTR1 degradation through polyubiquitination.

Its subcellular location is the nucleus. The protein localises to the cytoplasm. Functionally, acts as a central player within a network of stress response pathways promoting cellular adaptability. The E3 ligase HUWE1 assists HAPSTR1 in controlling stress signaling and in turn, HUWE1 feeds back to promote the degradation of HAPSTR1. HAPSTR1 represents a central coordination mechanism for stress response programs. Functions as a negative regulator of TP53/P53 in the cellular response to telomere erosion and probably also DNA damage. May attenuate p53/TP53 activation through the E3 ubiquitin ligase HUWE1. The sequence is that of HUWE1-associated protein modifying stress responses 1 from Homo sapiens (Human).